The primary structure comprises 288 residues: Phenazine biosynthesis-like domain-containing protein (288 aa).

The active site involves glutamate 46.

Belongs to the PhzF family. In terms of assembly, interacts with UNRIP/MAWD.

In Homo sapiens (Human), this protein is Phenazine biosynthesis-like domain-containing protein (PBLD).